Consider the following 988-residue polypeptide: Ephrin type-B receptor 3 (988 aa).

Positions 1–24 (GVSSRARRPPGSSRSSRRGVTSEL) are disordered. At 1–534 (GVSSRARRPP…TSKTFQELPL (534 aa)) the chain is on the extracellular side. The region spanning 11–189 (GSSRSSRRGV…FYKKCSNTIA (179 aa)) is the Eph LBD domain. Residues cysteine 53 and cysteine 171 are joined by a disulfide bond. 2 consecutive Fibronectin type-III domains span residues 311–424 (VPSA…TNQA) and 425–522 (APSA…TAED). 2 N-linked (GlcNAc...) asparagine glycosylation sites follow: asparagine 323 and asparagine 418. Residues 535–555 (IVGSATAGLLFVIVVVIIAIV) traverse the membrane as a helical segment. The Cytoplasmic portion of the chain corresponds to 556 to 988 (CFRKGMVTEQ…QMNQTLPVQV (433 aa)). The residue at position 604 (tyrosine 604) is a Phosphotyrosine; by autocatalysis. A Protein kinase domain is found at 623–886 (VKIEEVIGAG…QIVNTLDKLI (264 aa)). ATP-binding positions include 629-637 (IGAGEFGEV) and lysine 655. The Proton acceptor role is filled by aspartate 748. Residues 915 to 979 (TTFTTVGDWL…LSSIQDMRLQ (65 aa)) enclose the SAM domain. Residues 986–988 (VQV) carry the PDZ-binding motif.

The protein belongs to the protein kinase superfamily. Tyr protein kinase family. Ephrin receptor subfamily. As to quaternary structure, heterotetramer upon binding of the ligand. The heterotetramer is composed of an ephrin dimer and a receptor dimer. Oligomerization is probably required to induce biological responses. Phosphorylated. Autophosphorylates upon ligand-binding. Autophosphorylation on Tyr-604 is required for interaction with SH2 domain-containing proteins. In terms of tissue distribution, present in 10-day embryonic brain and body tissues. Prominent expression in kidney. Lower expression in lung, and barely detectable in brain, liver, heart, skeletal muscle and thymus.

The protein localises to the cell membrane. It localises to the cell projection. The protein resides in the dendrite. It catalyses the reaction L-tyrosyl-[protein] + ATP = O-phospho-L-tyrosyl-[protein] + ADP + H(+). Its function is as follows. Receptor tyrosine kinase which binds promiscuously transmembrane ephrin-B family ligands residing on adjacent cells, leading to contact-dependent bidirectional signaling into neighboring cells. The signaling pathway downstream of the receptor is referred to as forward signaling while the signaling pathway downstream of the ephrin ligand is referred to as reverse signaling. Generally has an overlapping and redundant function with EPHB2. Like EPHB2, functions in axon guidance during development. In addition to its role in axon guidance also plays an important redundant role with other ephrin-B receptors in development and maturation of dendritic spines and the formation of excitatory synapses. May control other aspects of development through regulation of cell migration and positioning. In Gallus gallus (Chicken), this protein is Ephrin type-B receptor 3 (EPHB3).